The chain runs to 228 residues: Ribulose-phosphate 3-epimerase (228 aa).

Substrate is bound at residue S9. H34, D36, and H70 together coordinate a divalent metal cation. The Proton acceptor role is filled by D36. Residues H70, 146-149 (GKGG), 175-177 (DGG), and 197-198 (GT) contribute to the substrate site. A divalent metal cation is bound at residue D175. The active-site Proton donor is D175.

It belongs to the ribulose-phosphate 3-epimerase family. Co(2+) serves as cofactor. Requires Fe(2+) as cofactor. Mn(2+) is required as a cofactor. The cofactor is Zn(2+).

The enzyme catalyses D-ribulose 5-phosphate = D-xylulose 5-phosphate. Its pathway is carbohydrate degradation; pentose phosphate pathway; D-xylulose 5-phosphate from D-ribulose 5-phosphate (non-oxidative stage): step 1/1. Functionally, catalyzes the reversible epimerization of D-ribulose 5-phosphate to D-xylulose 5-phosphate. The sequence is that of Ribulose-phosphate 3-epimerase from Schizosaccharomyces pombe (strain 972 / ATCC 24843) (Fission yeast).